The sequence spans 266 residues: Small ribosomal subunit protein uS3 (266 aa).

One can recognise a KH type-2 domain in the interval 39 to 107; it reads VREYLKKKLK…PVHVNIEEIR (69 aa). The tract at residues 214–266 is disordered; sequence PVVEEVTEDKRPRRNARPGDRRPRRDGEGGAPGARRGGPRRGAGKPEDGKTGE. Composition is skewed to basic and acidic residues over residues 230–241 and 257–266; these read RPGDRRPRRDGE and GKPEDGKTGE.

It belongs to the universal ribosomal protein uS3 family. In terms of assembly, part of the 30S ribosomal subunit. Forms a tight complex with proteins S10 and S14.

Functionally, binds the lower part of the 30S subunit head. Binds mRNA in the 70S ribosome, positioning it for translation. The polypeptide is Small ribosomal subunit protein uS3 (Burkholderia mallei (strain NCTC 10247)).